The primary structure comprises 261 residues: Urease accessory protein UreD (261 aa).

This sequence belongs to the UreD family. As to quaternary structure, ureD, UreF and UreG form a complex that acts as a GTP-hydrolysis-dependent molecular chaperone, activating the urease apoprotein by helping to assemble the nickel containing metallocenter of UreC. The UreE protein probably delivers the nickel.

It localises to the cytoplasm. Functionally, required for maturation of urease via the functional incorporation of the urease nickel metallocenter. This Haemophilus influenzae (strain ATCC 51907 / DSM 11121 / KW20 / Rd) protein is Urease accessory protein UreD.